The sequence spans 219 residues: Ribosomal RNA small subunit methyltransferase I (219 aa).

This sequence belongs to the methyltransferase superfamily. RsmI family.

Its subcellular location is the cytoplasm. The enzyme catalyses cytidine(1402) in 16S rRNA + S-adenosyl-L-methionine = 2'-O-methylcytidine(1402) in 16S rRNA + S-adenosyl-L-homocysteine + H(+). In terms of biological role, catalyzes the 2'-O-methylation of the ribose of cytidine 1402 (C1402) in 16S rRNA. The sequence is that of Ribosomal RNA small subunit methyltransferase I from Coprothermobacter proteolyticus (strain ATCC 35245 / DSM 5265 / OCM 4 / BT).